The following is a 677-amino-acid chain: Methionine--tRNA ligase (677 aa).

The short motif at 15 to 25 (PYANGSIHLGH) is the 'HIGH' region element. Zn(2+) is bound by residues cysteine 146, cysteine 149, cysteine 159, and cysteine 162. The 'KMSKS' region signature appears at 333–337 (KMSKS). Residue lysine 336 participates in ATP binding. Residues 576–677 (DFAKIDLRVA…EGAKPGMRVK (102 aa)) form the tRNA-binding domain.

It belongs to the class-I aminoacyl-tRNA synthetase family. MetG type 1 subfamily. In terms of assembly, homodimer. It depends on Zn(2+) as a cofactor.

It localises to the cytoplasm. It carries out the reaction tRNA(Met) + L-methionine + ATP = L-methionyl-tRNA(Met) + AMP + diphosphate. In terms of biological role, is required not only for elongation of protein synthesis but also for the initiation of all mRNA translation through initiator tRNA(fMet) aminoacylation. The protein is Methionine--tRNA ligase of Aeromonas hydrophila subsp. hydrophila (strain ATCC 7966 / DSM 30187 / BCRC 13018 / CCUG 14551 / JCM 1027 / KCTC 2358 / NCIMB 9240 / NCTC 8049).